Here is a 228-residue protein sequence, read N- to C-terminus: MPAFFVTGTDTEIGKTTIAAGLLHAARSAGLSTAAAKPVASGCEATAQGLRNGDALALLGECSLALAYEQVNPLAFEPAIAPHLAAREAGVELSAARLHDAVREVLALRADFTLVEGAGGWRVPLQGRENLSDLARLLGLPVVLVVGVRLGCINHALLSAEAILGDGLALAGWVANIVDPATSRLEENLATLAERLPAPCLGRVPRLADAGPAAVAAHLDLRPLGIGL.

E12–T17 contributes to the ATP binding site. T16 contacts Mg(2+). The active site involves K37. S41 is a binding site for substrate. ATP-binding positions include D54, E116–G119, and P205–L207. Positions 54 and 116 each coordinate Mg(2+).

The protein belongs to the dethiobiotin synthetase family. As to quaternary structure, homodimer. Mg(2+) serves as cofactor.

It localises to the cytoplasm. It carries out the reaction (7R,8S)-7,8-diammoniononanoate + CO2 + ATP = (4R,5S)-dethiobiotin + ADP + phosphate + 3 H(+). It participates in cofactor biosynthesis; biotin biosynthesis; biotin from 7,8-diaminononanoate: step 1/2. Catalyzes a mechanistically unusual reaction, the ATP-dependent insertion of CO2 between the N7 and N8 nitrogen atoms of 7,8-diaminopelargonic acid (DAPA, also called 7,8-diammoniononanoate) to form a ureido ring. This Pseudomonas paraeruginosa (strain DSM 24068 / PA7) (Pseudomonas aeruginosa (strain PA7)) protein is ATP-dependent dethiobiotin synthetase BioD.